A 421-amino-acid polypeptide reads, in one-letter code: Galactooligosaccharide-binding protein (421 aa).

Positions 1-22 (MKMAKKCSVFMLCAAVSLSLAA) are cleaved as a signal peptide. Cys-23 is lipidated: N-palmitoyl cysteine. Cys-23 carries S-diacylglycerol cysteine lipidation. Residues 393-421 (ATGKADPKQALDQAAETAKGQIKAKHSGK) are disordered.

This sequence belongs to the bacterial solute-binding protein 1 family. In terms of assembly, the complex is composed of two ATP-binding proteins (MsmX), two transmembrane proteins (GanP and GanQ) and a solute-binding protein (GanS).

The protein localises to the cell membrane. Involved in galactan degradation. Part of the ABC transporter complex GanPQS involved in the uptake of galactooligosaccharides. Binds mainly galactotetraose and galactotriose. This Bacillus subtilis (strain 168) protein is Galactooligosaccharide-binding protein.